Reading from the N-terminus, the 196-residue chain is DnaA initiator-associating protein DiaA (196 aa).

An SIS domain is found at 34 to 196; the sequence is LVQSLLNGNK…DNTLFPHQND (163 aa).

This sequence belongs to the SIS family. DiaA subfamily. As to quaternary structure, homotetramer; dimer of dimers.

Functionally, required for the timely initiation of chromosomal replication via direct interactions with the DnaA initiator protein. The protein is DnaA initiator-associating protein DiaA of Yersinia pestis bv. Antiqua (strain Antiqua).